The sequence spans 294 residues: Elongation factor Ts (294 aa).

Positions 82–85 are involved in Mg(2+) ion dislocation from EF-Tu; that stretch reads TDFV.

The protein belongs to the EF-Ts family.

The protein resides in the cytoplasm. Functionally, associates with the EF-Tu.GDP complex and induces the exchange of GDP to GTP. It remains bound to the aminoacyl-tRNA.EF-Tu.GTP complex up to the GTP hydrolysis stage on the ribosome. The sequence is that of Elongation factor Ts from Psychrobacter cryohalolentis (strain ATCC BAA-1226 / DSM 17306 / VKM B-2378 / K5).